A 440-amino-acid polypeptide reads, in one-letter code: Thymidine phosphorylase (440 aa).

The protein belongs to the thymidine/pyrimidine-nucleoside phosphorylase family. Homodimer.

The enzyme catalyses thymidine + phosphate = 2-deoxy-alpha-D-ribose 1-phosphate + thymine. The protein operates within pyrimidine metabolism; dTMP biosynthesis via salvage pathway; dTMP from thymine: step 1/2. Its function is as follows. The enzymes which catalyze the reversible phosphorolysis of pyrimidine nucleosides are involved in the degradation of these compounds and in their utilization as carbon and energy sources, or in the rescue of pyrimidine bases for nucleotide synthesis. The polypeptide is Thymidine phosphorylase (Salmonella paratyphi A (strain ATCC 9150 / SARB42)).